Reading from the N-terminus, the 523-residue chain is Jerky protein homolog-like (523 aa).

The HTH psq-type domain maps to 1-52 (MSGKRKRVVLTIKDKLDIIKKLEDGGSSKQLAVIYGIGETTVRDIRKNKEKI). DNA-binding regions (H-T-H motif) lie at residues 28 to 48 (SKQL…IRKN) and 100 to 132 (PICA…FKQR). The HTH CENPB-type domain occupies 67-139 (KRKSMKPSMY…KQRHSIREIN (73 aa)). The 218-residue stretch at 168-385 (LQPEQIYNAD…VKPVTISRAW (218 aa)) folds into the DDE-1 domain.

It belongs to the tigger transposable element derived protein family.

Its subcellular location is the nucleus. The polypeptide is Jerky protein homolog-like (Jrkl) (Mus musculus (Mouse)).